The chain runs to 325 residues: L-lactate dehydrogenase 1 (325 aa).

Residues Val-17, Asp-38, Lys-43, Tyr-68, and 82-83 contribute to the NAD(+) site; that span reads GA. Substrate contacts are provided by residues Gln-85, Arg-91, and 123-126; that span reads NPVD. NAD(+) is bound by residues 121–123 and Ser-146; that span reads AAN. 151–154 contacts substrate; it reads DTAR. Residues Arg-156 and His-171 each contribute to the beta-D-fructose 1,6-bisphosphate site. His-178 (proton acceptor) is an active-site residue. The residue at position 223 (Tyr-223) is a Phosphotyrosine. Substrate is bound at residue Thr-232.

The protein belongs to the LDH/MDH superfamily. LDH family. In terms of assembly, homotetramer.

Its subcellular location is the cytoplasm. It catalyses the reaction (S)-lactate + NAD(+) = pyruvate + NADH + H(+). It participates in fermentation; pyruvate fermentation to lactate; (S)-lactate from pyruvate: step 1/1. Its activity is regulated as follows. Allosterically activated by fructose 1,6-bisphosphate (FBP). Its function is as follows. Catalyzes the conversion of lactate to pyruvate. The protein is L-lactate dehydrogenase 1 of Lactococcus lactis subsp. lactis (strain IL1403) (Streptococcus lactis).